Consider the following 319-residue polypeptide: ATP-dependent 6-phosphofructokinase (319 aa).

ATP is bound at residue G11. 21–25 (RSIAR) is an ADP binding site. Residues 72-73 (RC) and 102-105 (GDGS) contribute to the ATP site. D103 is a Mg(2+) binding site. 125–127 (TID) is a substrate binding site. The active-site Proton acceptor is D127. R154 serves as a coordination point for ADP. Residues R162 and 169 to 171 (MGR) each bind substrate. ADP contacts are provided by residues 185-187 (GAE), R211, and 213-215 (KLH). Substrate contacts are provided by residues E222, K243, and 249-252 (HVQR).

This sequence belongs to the phosphofructokinase type A (PFKA) family. ATP-dependent PFK group I subfamily. Prokaryotic clade 'B1' sub-subfamily. In terms of assembly, homotetramer. Mg(2+) serves as cofactor.

It is found in the cytoplasm. The catalysed reaction is beta-D-fructose 6-phosphate + ATP = beta-D-fructose 1,6-bisphosphate + ADP + H(+). Its pathway is carbohydrate degradation; glycolysis; D-glyceraldehyde 3-phosphate and glycerone phosphate from D-glucose: step 3/4. Allosterically activated by ADP and other diphosphonucleosides, and allosterically inhibited by phosphoenolpyruvate. In terms of biological role, catalyzes the phosphorylation of D-fructose 6-phosphate to fructose 1,6-bisphosphate by ATP, the first committing step of glycolysis. The chain is ATP-dependent 6-phosphofructokinase from Finegoldia magna (strain ATCC 29328 / DSM 20472 / WAL 2508) (Peptostreptococcus magnus).